The following is a 309-amino-acid chain: Elongation factor Ts (309 aa).

The interval 82–85 (TDFV) is involved in Mg(2+) ion dislocation from EF-Tu.

Belongs to the EF-Ts family.

The protein localises to the cytoplasm. Functionally, associates with the EF-Tu.GDP complex and induces the exchange of GDP to GTP. It remains bound to the aminoacyl-tRNA.EF-Tu.GTP complex up to the GTP hydrolysis stage on the ribosome. This chain is Elongation factor Ts, found in Rickettsia massiliae (strain Mtu5).